The chain runs to 331 residues: Tungstate uptake system ATP-binding protein TupC (331 aa).

The ABC transporter domain maps to 2-230; sequence IEISNLFFNY…NQGVKFCNFI (229 aa). 34–41 provides a ligand contact to ATP; the sequence is GANGSGKS.

Belongs to the ABC transporter superfamily. In terms of assembly, the complex is composed of two ATP-binding proteins (TupC), two transmembrane proteins (TupB) and a solute-binding protein (TupA).

It carries out the reaction tungstate(in) + ATP + H2O = tungstate(out) + ADP + phosphate + H(+). Its function is as follows. Part of an ABC transporter complex involved in ultra-high affinity tungstate uptake. Probably responsible for energy coupling to the transport system. The polypeptide is Tungstate uptake system ATP-binding protein TupC (Campylobacter jejuni subsp. jejuni serotype O:2 (strain ATCC 700819 / NCTC 11168)).